The primary structure comprises 264 residues: tRNA pseudouridine synthase A (264 aa).

The active-site Nucleophile is Asp-51. Tyr-109 serves as a coordination point for substrate.

This sequence belongs to the tRNA pseudouridine synthase TruA family. In terms of assembly, homodimer.

It catalyses the reaction uridine(38/39/40) in tRNA = pseudouridine(38/39/40) in tRNA. Its function is as follows. Formation of pseudouridine at positions 38, 39 and 40 in the anticodon stem and loop of transfer RNAs. The polypeptide is tRNA pseudouridine synthase A (Vibrio parahaemolyticus serotype O3:K6 (strain RIMD 2210633)).